Consider the following 172-residue polypeptide: Myosin regulatory light chain 2, smooth muscle major isoform (172 aa).

Positions 1–16 are enriched in basic residues; sequence MSSKRAKAKTTKKRPQ. The disordered stretch occupies residues 1-20; sequence MSSKRAKAKTTKKRPQRATS. Ser-2 bears the N-acetylserine mark. EF-hand domains follow at residues 29–64, 98–133, and 134–169; these read SQIQEFKEAFNMIDQNRDGFIDKEDLHDMLASMGKN, DPEDVIRNAFACFDEEASGFIHEDHLRELLTTMGDR, and FTDEEVDEMYREAPIDKKGNFNYVEFTRILKHGAKD. Ca(2+) contacts are provided by Asp-42, Asn-44, Asp-46, and Asp-53.

As to quaternary structure, myosin is a hexamer of 2 heavy chains and 4 light chains.

In terms of biological role, myosin regulatory subunit that plays an important role in regulation of both smooth muscle and nonmuscle cell contractile activity. Implicated in cytokinesis, receptor capping, and cell locomotion. The protein is Myosin regulatory light chain 2, smooth muscle major isoform of Gallus gallus (Chicken).